A 299-amino-acid polypeptide reads, in one-letter code: MSQVQSGILPEHCRAAIWIEANVKGEVDALRAASKTFADKLATFEAKFPDAHLGAVVAFGNNIWRALSGGVGAEELKDFPGYGKGLAPTTQFDVLIHILSLRHDVNFSVAQAAMEAFGDCIEVKEEIHGFRWVEERDLSGFVDGTENPAGEETRREVAVIKDGVDAGGSYVFVQRWEHNLKQLNRMSVHDQEMMIGRTKEANEEIDGDERPETSHLTRVDLKEDGKGLKIVRQSLPYGTASGTHGLYFCAYCARLHNIEQQLLSMFGDTDGKRDAMLRFTKPVTGGYYFAPSLDKLMAL.

His-215 contributes to the heme binding site.

It belongs to the DyP-type peroxidase family. It depends on heme b as a cofactor.

The protein localises to the cytoplasm. In terms of biological role, has both general peroxidase activity and dye-decolorizing activity. Can catalyze the oxidation of 2,2'-azino-bis(3-ethylbenzothiazoline-6-sulphonic acid) (ABTS), and the phenolic compounds guaiacol and catechol. Also decolorizes the anthraquinone dye reactive blue 19 (RB19). This Escherichia coli O157:H7 protein is Dye-decolorizing peroxidase YfeX.